The following is a 165-amino-acid chain: Protoporphyrinogen IX oxidase (165 aa).

The next 4 helical transmembrane spans lie at 26-46 (LHVISVLAWMAGLFYLPRLFV), 77-97 (AMIATWIFGLLLVFTPGIVDW), 99-119 (MLWPWTKAACVLAMTGFHMWL), and 145-165 (PTLLMLVIVFSAVAKWNYWGF). A heme-binding site is contributed by His-27. Lys-105 serves as a coordination point for heme.

It belongs to the HemJ family. In terms of assembly, homodimer. Heme b is required as a cofactor.

The protein resides in the cell membrane. It carries out the reaction protoporphyrinogen IX + 3 A = protoporphyrin IX + 3 AH2. It functions in the pathway porphyrin-containing compound metabolism; protoporphyrin-IX biosynthesis; protoporphyrin-IX from protoporphyrinogen-IX: step 1/1. In terms of biological role, catalyzes the oxidation of protoporphyrinogen IX to protoporphyrin IX. Is involved in the biosynthesis of tetrapyrrole molecules like heme and chlorophyll. Does not use oxygen or artificial electron acceptors such as menadione or benzoquinone. This Cereibacter sphaeroides (strain ATCC 17023 / DSM 158 / JCM 6121 / CCUG 31486 / LMG 2827 / NBRC 12203 / NCIMB 8253 / ATH 2.4.1.) (Rhodobacter sphaeroides) protein is Protoporphyrinogen IX oxidase.